The sequence spans 462 residues: Arginine biosynthesis bifunctional protein ArgJ, mitochondrial (462 aa).

Positions 200, 228, 239, 326, 457, and 462 each coordinate substrate. Catalysis depends on Thr239, which acts as the Nucleophile.

It belongs to the ArgJ family. As to quaternary structure, heterodimer of an alpha and a beta chain. Post-translationally, the alpha and beta chains are autoproteolytically processed from a single precursor protein within the mitochondrion.

It localises to the mitochondrion matrix. It carries out the reaction N(2)-acetyl-L-ornithine + L-glutamate = N-acetyl-L-glutamate + L-ornithine. The enzyme catalyses L-glutamate + acetyl-CoA = N-acetyl-L-glutamate + CoA + H(+). The protein operates within amino-acid biosynthesis; L-arginine biosynthesis; L-ornithine and N-acetyl-L-glutamate from L-glutamate and N(2)-acetyl-L-ornithine (cyclic): step 1/1. It functions in the pathway amino-acid biosynthesis; L-arginine biosynthesis; N(2)-acetyl-L-ornithine from L-glutamate: step 1/4. In terms of biological role, catalyzes two activities which are involved in the cyclic version of arginine biosynthesis: the synthesis of acetylglutamate from glutamate and acetyl-CoA, and of ornithine by transacetylation between acetylornithine and glutamate. In Pyrenophora tritici-repentis (strain Pt-1C-BFP) (Wheat tan spot fungus), this protein is Arginine biosynthesis bifunctional protein ArgJ, mitochondrial.